A 331-amino-acid polypeptide reads, in one-letter code: Ribose-phosphate pyrophosphokinase (331 aa).

D55–E57 serves as a coordination point for ATP. Positions 148 and 187 each coordinate Mg(2+). Residue K211 is part of the active site. D-ribose 5-phosphate is bound by residues R213, D237, and D241–T245.

This sequence belongs to the ribose-phosphate pyrophosphokinase family. Class I subfamily. Homohexamer. Mg(2+) is required as a cofactor.

The protein localises to the cytoplasm. It catalyses the reaction D-ribose 5-phosphate + ATP = 5-phospho-alpha-D-ribose 1-diphosphate + AMP + H(+). It functions in the pathway metabolic intermediate biosynthesis; 5-phospho-alpha-D-ribose 1-diphosphate biosynthesis; 5-phospho-alpha-D-ribose 1-diphosphate from D-ribose 5-phosphate (route I): step 1/1. Its function is as follows. Involved in the biosynthesis of the central metabolite phospho-alpha-D-ribosyl-1-pyrophosphate (PRPP) via the transfer of pyrophosphoryl group from ATP to 1-hydroxyl of ribose-5-phosphate (Rib-5-P). The sequence is that of Ribose-phosphate pyrophosphokinase from Parasynechococcus marenigrum (strain WH8102).